The sequence spans 226 residues: Lysoplasmalogenase TMEM86B (226 aa).

Residues 1-23 (MDPGKEGLPRKPRFSAQQLHVGK) lie on the Cytoplasmic side of the membrane. Residues 24-40 (WLSPFFFTCAVYFLLWI) traverse the membrane as a helical segment. Topologically, residues 41–46 (PDDQPS) are extracellular. The chain crosses the membrane as a helical span at residues 47–64 (WVGALVKCLPVLSLVVFL). At 65–76 (RAVDAGGGYSAR) the chain is on the cytoplasmic side. A helical membrane pass occupies residues 77 to 93 (LQGALLCSAVGDACLVW). The Extracellular portion of the chain corresponds to 94 to 99 (PEAFLH). Residues 100–117 (GVAAFAAAHLLYLWAFGL) traverse the membrane as a helical segment. Topologically, residues 118-123 (TPLQPG) are cytoplasmic. A helical membrane pass occupies residues 124–140 (LLLLVILAALPYYGLLL). Residues 141 to 146 (WHLPPD) lie on the Extracellular side of the membrane. Residues 147–163 (LVLALTAYSLALATMLW) traverse the membrane as a helical segment. The Cytoplasmic portion of the chain corresponds to 164-171 (RGLARGGS). Residues 172 to 188 (TGWGALLFTLSDTTLAW) form a helical membrane-spanning segment. The Extracellular segment spans residues 189 to 199 (NAFAQPLPHAR). The helical transmembrane segment at 200–217 (LVVMTTYYSAQVLISLSV) threads the bilayer. Topologically, residues 218–226 (SQSPKLKPN) are cytoplasmic.

It belongs to the TMEM86 family. As to quaternary structure, homodimer.

The protein resides in the endoplasmic reticulum membrane. The protein localises to the cytoplasm. It catalyses the reaction a 1-O-(1Z-alkenyl)-sn-glycero-3-phosphocholine + H2O = a 2,3-saturated aldehyde + sn-glycerol 3-phosphocholine. The catalysed reaction is a 1-O-(1Z-alkenyl)-sn-glycero-3-phosphoethanolamine + H2O = a 2,3-saturated aldehyde + sn-glycero-3-phosphoethanolamine. With respect to regulation, competitively inhibited by lysophosphatidic acid. Its function is as follows. Catalyzes the hydrolysis of the vinyl ether bond of choline or ethanolamine lysoplasmalogens, forming fatty aldehyde and glycerophosphocholine or glycerophosphoethanolamine, respectively and is specific for the sn-2-deacylated (lyso) form of plasmalogen. The chain is Lysoplasmalogenase TMEM86B (TMEM86B) from Sus scrofa (Pig).